The sequence spans 503 residues: Variant surface glycoprotein ILTAT 1.3 (503 aa).

The N-terminal stretch at 1 to 29 (MTKAYENRMLLQALVLAAVLCTTHAEGTA) is a signal peptide. 2 cysteine pairs are disulfide-bonded: Cys42-Cys168 and Cys150-Cys206. N-linked (GlcNAc...) asparagine glycosylation is found at Asn419 and Asn432. A lipid anchor (GPI-anchor amidated aspartate) is attached at Asp480. Residues 481-503 (SSFILNKQFALSVVSAAFAALLF) constitute a propeptide, removed in mature form.

It is found in the cell membrane. In terms of biological role, VSG forms a coat on the surface of the parasite. The trypanosome evades the immune response of the host by expressing a series of antigenically distinct VSGs from an estimated 1000 VSG genes. This is Variant surface glycoprotein ILTAT 1.3 from Trypanosoma brucei brucei.